The following is a 361-amino-acid chain: Ankyrin repeat domain-containing protein 16 (361 aa).

ANK repeat units lie at residues 36-66 (AGDTLLHCAARHGRQDILAYLVEAWSMDIEA), 70-99 (DYKRPLHEAASMGHRDCVRYLLGRGAVVDS), 103-132 (ADWTPLMMACTRKNLDVIQDLVEHGANPLL), 136-165 (DGWNSFHIASREGHPVILRYLLTVCPDAWK), 170-200 (IRRTPLHTAAMHGCLEAVQVLLERCHYEPDC), 204-233 (CGVTPFMDAIQCGHVSIAKLLLEQHKACSS), 238-268 (MGAQALHRAAVTGQDEAIRFLVCGLGIDVDV), 273-302 (SQLTALHYAAKEGQTNTVQTLLSLGADINS), and 306-335 (RNRSVLHLACAGQHVACTRLLLQSGLKDSE).

As to quaternary structure, interacts with AARS; the interaction is direct. Widely expressed in brain (at protein level).

The protein resides in the cytoplasm. It localises to the nucleus. Its function is as follows. Required to prevent the misactivation of serine (Ser) with tRNA(Ala) by promoting the hydrolysis of Ser-mischarged tRNA(Ala), thereby playing a role in translational fidelity. Binds directly to the catalytic domain of AARS/AlaRS and captures Ser that is misactivated by AARS/AlaRS, preventing the charging of Ser adenylates to tRNA(Ala) and precluding Ser misincorporation in nascent peptides. In Mus musculus (Mouse), this protein is Ankyrin repeat domain-containing protein 16.